The following is a 78-amino-acid chain: Large ribosomal subunit protein bL28 (78 aa).

The protein belongs to the bacterial ribosomal protein bL28 family.

This chain is Large ribosomal subunit protein bL28, found in Pseudoalteromonas atlantica (strain T6c / ATCC BAA-1087).